We begin with the raw amino-acid sequence, 126 residues long: Small ribosomal subunit protein uS13c (126 aa).

A disordered region spans residues 97 to 126 (PLRGQRTRTNARTRRGGKKTVAGKKKAPRK). A compositionally biased stretch (basic residues) spans 101-126 (QRTRTNARTRRGGKKTVAGKKKAPRK).

The protein belongs to the universal ribosomal protein uS13 family. In terms of assembly, part of the 30S ribosomal subunit.

It is found in the plastid. Its subcellular location is the chloroplast. Functionally, located at the top of the head of the 30S subunit, it contacts several helices of the 16S rRNA. This Pyropia yezoensis (Susabi-nori) protein is Small ribosomal subunit protein uS13c.